The primary structure comprises 352 residues: S-adenosylmethionine:tRNA ribosyltransferase-isomerase (352 aa).

This sequence belongs to the QueA family. In terms of assembly, monomer.

It is found in the cytoplasm. It carries out the reaction 7-aminomethyl-7-carbaguanosine(34) in tRNA + S-adenosyl-L-methionine = epoxyqueuosine(34) in tRNA + adenine + L-methionine + 2 H(+). It participates in tRNA modification; tRNA-queuosine biosynthesis. In terms of biological role, transfers and isomerizes the ribose moiety from AdoMet to the 7-aminomethyl group of 7-deazaguanine (preQ1-tRNA) to give epoxyqueuosine (oQ-tRNA). In Bacteroides fragilis (strain ATCC 25285 / DSM 2151 / CCUG 4856 / JCM 11019 / LMG 10263 / NCTC 9343 / Onslow / VPI 2553 / EN-2), this protein is S-adenosylmethionine:tRNA ribosyltransferase-isomerase.